The chain runs to 1088 residues: Probable cellulose synthase A catalytic subunit 9 [UDP-forming] (1088 aa).

Methionine 1 bears the N-acetylmethionine mark. Topologically, residues 1-283 (MNTGGRLIAG…RSSRINPYRM (283 aa)) are cytoplasmic. The Zn(2+) site is built by cysteine 39, cysteine 42, cysteine 58, cysteine 61, cysteine 66, cysteine 69, cysteine 81, and cysteine 84. The RING-type; degenerate zinc-finger motif lies at 39 to 85 (CKICRDEIELTDNGEPFIACNECAFPTCRPCYEYERREGNQACPQCG). Residues 284 to 304 (LIFCRLAILGLFFHYRILHPV) traverse the membrane as a helical segment. At 305–306 (ND) the chain is on the extracellular side. Residues 307–327 (AFGLWLTSVICEIWFAVSWIL) traverse the membrane as a helical segment. The Cytoplasmic portion of the chain corresponds to 328 to 871 (DQFPKWYPIE…INSVVYPWTS (544 aa)). Residues serine 366, lysine 372, glutamate 373, aspartate 402, and lysine 543 each contribute to the UDP-alpha-D-glucose site. Aspartate 402 is a catalytic residue. Mn(2+)-binding residues include lysine 544 and aspartate 568. Aspartate 788 is a catalytic residue. A helical membrane pass occupies residues 872-892 (LPLLVYCSLPAICLLTGKFIV). Residues 893-897 (PEISN) are Extracellular-facing. Residues 898 to 918 (YAGILFLLMFMSIAVTGILEM) traverse the membrane as a helical segment. Over 919-933 (QWGKIGIDDWWRNEQ) the chain is Cytoplasmic. The helical transmembrane segment at 934–954 (FWVIGGVSSHLFALFQGLLKV) threads the bilayer. Topologically, residues 955-983 (LAGVSTNFTVTSKAADDGEFSELYIFKWT) are extracellular. Residue asparagine 961 is glycosylated (N-linked (GlcNAc...) asparagine). The chain crosses the membrane as a helical span at residues 984–1004 (SLLIPPTTLLIINIVGVIVGV). The Cytoplasmic portion of the chain corresponds to 1005-1015 (SDAINNGYDSW). A helical transmembrane segment spans residues 1016-1036 (GPLFGRLFFALWVIVHLYPFL). Topologically, residues 1037 to 1045 (KGLLGKQDR) are extracellular. The chain crosses the membrane as a helical span at residues 1046 to 1066 (VPTIILVWSILLASILTLLWV). Residues 1067–1088 (RVNPFVSKDGPVLEICGLDCLK) are Cytoplasmic-facing.

It belongs to the glycosyltransferase 2 family. Plant cellulose synthase subfamily. Requires Mn(2+) as cofactor. It depends on Zn(2+) as a cofactor. As to expression, expressed in young plants, stems and flowers.

The protein resides in the cell membrane. The catalysed reaction is [(1-&gt;4)-beta-D-glucosyl](n) + UDP-alpha-D-glucose = [(1-&gt;4)-beta-D-glucosyl](n+1) + UDP + H(+). It functions in the pathway glycan metabolism; plant cellulose biosynthesis. Functionally, probable catalytic subunit of cellulose synthase terminal complexes ('rosettes'), required for beta-1,4-glucan microfibril crystallization, a major mechanism of the cell wall formation. In Arabidopsis thaliana (Mouse-ear cress), this protein is Probable cellulose synthase A catalytic subunit 9 [UDP-forming].